We begin with the raw amino-acid sequence, 331 residues long: L-lactate dehydrogenase A chain (331 aa).

Residues 29 to 57 (GMVG…MEDK) and Arg98 each bind NAD(+). Substrate contacts are provided by Arg105, Asn137, and Arg168. NAD(+) is bound at residue Asn137. Catalysis depends on His192, which acts as the Proton acceptor. Thr247 contacts substrate.

Belongs to the LDH/MDH superfamily. LDH family. Homotetramer.

The protein localises to the cytoplasm. It carries out the reaction (S)-lactate + NAD(+) = pyruvate + NADH + H(+). It functions in the pathway fermentation; pyruvate fermentation to lactate; (S)-lactate from pyruvate: step 1/1. In terms of biological role, interconverts simultaneously and stereospecifically pyruvate and lactate with concomitant interconversion of NADH and NAD(+). The sequence is that of L-lactate dehydrogenase A chain (ldha) from Harpagifer antarcticus (Antarctic spiny plunderfish).